The sequence spans 240 residues: Ubiquinone biosynthesis O-methyltransferase (240 aa).

The S-adenosyl-L-methionine site is built by Arg44, Gly64, Asp85, and Met129.

The protein belongs to the methyltransferase superfamily. UbiG/COQ3 family.

It catalyses the reaction a 3-demethylubiquinol + S-adenosyl-L-methionine = a ubiquinol + S-adenosyl-L-homocysteine + H(+). The enzyme catalyses a 3-(all-trans-polyprenyl)benzene-1,2-diol + S-adenosyl-L-methionine = a 2-methoxy-6-(all-trans-polyprenyl)phenol + S-adenosyl-L-homocysteine + H(+). Its pathway is cofactor biosynthesis; ubiquinone biosynthesis. Its function is as follows. O-methyltransferase that catalyzes the 2 O-methylation steps in the ubiquinone biosynthetic pathway. This is Ubiquinone biosynthesis O-methyltransferase from Photorhabdus laumondii subsp. laumondii (strain DSM 15139 / CIP 105565 / TT01) (Photorhabdus luminescens subsp. laumondii).